The following is a 304-amino-acid chain: Signal recognition particle receptor FtsY (304 aa).

Residues 109–116, 191–195, and 255–258 contribute to the GTP site; these read GVNGVGKT, DTAGR, and TKLD.

This sequence belongs to the GTP-binding SRP family. FtsY subfamily. Part of the signal recognition particle protein translocation system, which is composed of SRP and FtsY. Sensitive to endogenous proteolytic cleavage between residues 18 and 19 and between residues 86 and 87.

It is found in the cell membrane. Its subcellular location is the cytoplasm. The catalysed reaction is GTP + H2O = GDP + phosphate + H(+). Its function is as follows. Involved in targeting and insertion of nascent membrane proteins into the cytoplasmic membrane. Acts as a receptor for the complex formed by the signal recognition particle (SRP) and the ribosome-nascent chain (RNC). This is Signal recognition particle receptor FtsY from Thermus aquaticus.